Reading from the N-terminus, the 505-residue chain is ATP synthase subunit alpha (505 aa).

170–177 contributes to the ATP binding site; that stretch reads GDRQTGKT.

Belongs to the ATPase alpha/beta chains family. In terms of assembly, F-type ATPases have 2 components, CF(1) - the catalytic core - and CF(0) - the membrane proton channel. CF(1) has five subunits: alpha(3), beta(3), gamma(1), delta(1), epsilon(1). CF(0) has four main subunits: a(1), b(1), b'(1) and c(9-12).

It localises to the cellular thylakoid membrane. The enzyme catalyses ATP + H2O + 4 H(+)(in) = ADP + phosphate + 5 H(+)(out). In terms of biological role, produces ATP from ADP in the presence of a proton gradient across the membrane. The alpha chain is a regulatory subunit. The chain is ATP synthase subunit alpha from Prochlorococcus marinus (strain MIT 9303).